The following is a 264-amino-acid chain: 2-C-methyl-D-erythritol 4-phosphate cytidylyltransferase (264 aa).

The tract at residues 234–264 is disordered; that stretch reads ARDPESAHPQSSVLASAFSGPGSRVSGPEEI.

The protein belongs to the IspD/TarI cytidylyltransferase family. IspD subfamily.

The catalysed reaction is 2-C-methyl-D-erythritol 4-phosphate + CTP + H(+) = 4-CDP-2-C-methyl-D-erythritol + diphosphate. It participates in isoprenoid biosynthesis; isopentenyl diphosphate biosynthesis via DXP pathway; isopentenyl diphosphate from 1-deoxy-D-xylulose 5-phosphate: step 2/6. In terms of biological role, catalyzes the formation of 4-diphosphocytidyl-2-C-methyl-D-erythritol from CTP and 2-C-methyl-D-erythritol 4-phosphate (MEP). The polypeptide is 2-C-methyl-D-erythritol 4-phosphate cytidylyltransferase (Xanthomonas euvesicatoria pv. vesicatoria (strain 85-10) (Xanthomonas campestris pv. vesicatoria)).